We begin with the raw amino-acid sequence, 124 residues long: uncharacterized protein (124 aa).

Residues 82–124 are disordered; it reads SDLGIEGGERAQGQNAHSVHGPGLQTERGGSQLQMVGHPLREL.

This is an uncharacterized protein from Human cytomegalovirus (strain AD169) (HHV-5).